Consider the following 172-residue polypeptide: RNA pyrophosphohydrolase (172 aa).

A Nudix hydrolase domain is found at 6-149 (GFRANVGIII…KRDVYRKVMK (144 aa)). Residues 38–59 (GGLDDGESVEEAMYRELYEEVG) carry the Nudix box motif.

It belongs to the Nudix hydrolase family. RppH subfamily. It depends on a divalent metal cation as a cofactor.

Its function is as follows. Accelerates the degradation of transcripts by removing pyrophosphate from the 5'-end of triphosphorylated RNA, leading to a more labile monophosphorylated state that can stimulate subsequent ribonuclease cleavage. This chain is RNA pyrophosphohydrolase, found in Shewanella frigidimarina (strain NCIMB 400).